Reading from the N-terminus, the 190-residue chain is Holliday junction branch migration complex subunit RuvA (190 aa).

The tract at residues 1–64 is domain I; the sequence is MIGRITGTLI…EDAHLLYGFG (64 aa). Residues 65 to 137 form a domain II region; that stretch reads TASERAAFRE…MRGKLGADIG (73 aa). The tract at residues 137–141 is flexible linker; the sequence is GATPH. Residues 142–190 are domain III; that stretch reads AVPDSQSDILNALLALGYSEKESLAALKTLPEGLGVSDGIRQALKALAR.

Belongs to the RuvA family. In terms of assembly, homotetramer. Forms an RuvA(8)-RuvB(12)-Holliday junction (HJ) complex. HJ DNA is sandwiched between 2 RuvA tetramers; dsDNA enters through RuvA and exits via RuvB. An RuvB hexamer assembles on each DNA strand where it exits the tetramer. Each RuvB hexamer is contacted by two RuvA subunits (via domain III) on 2 adjacent RuvB subunits; this complex drives branch migration. In the full resolvosome a probable DNA-RuvA(4)-RuvB(12)-RuvC(2) complex forms which resolves the HJ.

Its subcellular location is the cytoplasm. In terms of biological role, the RuvA-RuvB-RuvC complex processes Holliday junction (HJ) DNA during genetic recombination and DNA repair, while the RuvA-RuvB complex plays an important role in the rescue of blocked DNA replication forks via replication fork reversal (RFR). RuvA specifically binds to HJ cruciform DNA, conferring on it an open structure. The RuvB hexamer acts as an ATP-dependent pump, pulling dsDNA into and through the RuvAB complex. HJ branch migration allows RuvC to scan DNA until it finds its consensus sequence, where it cleaves and resolves the cruciform DNA. This is Holliday junction branch migration complex subunit RuvA from Bordetella avium (strain 197N).